A 157-amino-acid polypeptide reads, in one-letter code: Holo-[acyl-carrier-protein] synthase (157 aa).

2 residues coordinate Mg(2+): aspartate 8 and glutamate 59.

This sequence belongs to the P-Pant transferase superfamily. AcpS family. Mg(2+) serves as cofactor.

It is found in the cytoplasm. The enzyme catalyses apo-[ACP] + CoA = holo-[ACP] + adenosine 3',5'-bisphosphate + H(+). In terms of biological role, transfers the 4'-phosphopantetheine moiety from coenzyme A to a Ser of acyl-carrier-protein. The protein is Holo-[acyl-carrier-protein] synthase of Gluconobacter oxydans (strain 621H) (Gluconobacter suboxydans).